The chain runs to 365 residues: Anhydro-N-acetylmuramic acid kinase (365 aa).

9–16 contributes to the ATP binding site; that stretch reads GTSLDGVD.

It belongs to the anhydro-N-acetylmuramic acid kinase family.

The enzyme catalyses 1,6-anhydro-N-acetyl-beta-muramate + ATP + H2O = N-acetyl-D-muramate 6-phosphate + ADP + H(+). The protein operates within amino-sugar metabolism; 1,6-anhydro-N-acetylmuramate degradation. It functions in the pathway cell wall biogenesis; peptidoglycan recycling. Its function is as follows. Catalyzes the specific phosphorylation of 1,6-anhydro-N-acetylmuramic acid (anhMurNAc) with the simultaneous cleavage of the 1,6-anhydro ring, generating MurNAc-6-P. Is required for the utilization of anhMurNAc either imported from the medium or derived from its own cell wall murein, and thus plays a role in cell wall recycling. The chain is Anhydro-N-acetylmuramic acid kinase from Rhodopseudomonas palustris (strain BisB18).